Reading from the N-terminus, the 147-residue chain is Putative protein CLUHP3 (147 aa).

Residues Lys-14 to Ser-47 are disordered.

This Homo sapiens (Human) protein is Putative protein CLUHP3 (CLUHP3).